A 328-amino-acid polypeptide reads, in one-letter code: Delta-aminolevulinic acid dehydratase (328 aa).

Zn(2+) contacts are provided by C122, C124, and C132. The active-site Schiff-base intermediate with substrate is K197. Residues R207 and R219 each contribute to the 5-aminolevulinate site. E235 provides a ligand contact to Mg(2+). K250 (schiff-base intermediate with substrate) is an active-site residue. 5-aminolevulinate is bound by residues S276 and Y315.

The protein belongs to the ALAD family. Homooctamer. Zn(2+) is required as a cofactor.

It carries out the reaction 2 5-aminolevulinate = porphobilinogen + 2 H2O + H(+). It functions in the pathway porphyrin-containing compound metabolism; protoporphyrin-IX biosynthesis; coproporphyrinogen-III from 5-aminolevulinate: step 1/4. Its function is as follows. Catalyzes an early step in the biosynthesis of tetrapyrroles. Binds two molecules of 5-aminolevulinate per subunit, each at a distinct site, and catalyzes their condensation to form porphobilinogen. The sequence is that of Delta-aminolevulinic acid dehydratase (hemB) from Halalkalibacterium halodurans (strain ATCC BAA-125 / DSM 18197 / FERM 7344 / JCM 9153 / C-125) (Bacillus halodurans).